The following is a 156-amino-acid chain: Deoxyuridine 5'-triphosphate nucleotidohydrolase (156 aa).

Substrate contacts are provided by residues 74–76, asparagine 87, 91–93, and lysine 101; these read RSG and TID.

The protein belongs to the dUTPase family. Mg(2+) is required as a cofactor.

It catalyses the reaction dUTP + H2O = dUMP + diphosphate + H(+). Its pathway is pyrimidine metabolism; dUMP biosynthesis; dUMP from dCTP (dUTP route): step 2/2. Its function is as follows. This enzyme is involved in nucleotide metabolism: it produces dUMP, the immediate precursor of thymidine nucleotides and it decreases the intracellular concentration of dUTP so that uracil cannot be incorporated into DNA. The chain is Deoxyuridine 5'-triphosphate nucleotidohydrolase from Wolbachia sp. subsp. Brugia malayi (strain TRS).